A 65-amino-acid polypeptide reads, in one-letter code: Muscarinic m1-toxin2 (65 aa).

4 disulfides stabilise this stretch: Cys3/Cys24, Cys17/Cys42, Cys46/Cys57, and Cys58/Cys63.

The protein belongs to the three-finger toxin family. Short-chain subfamily. Aminergic toxin sub-subfamily. In terms of assembly, monomer. In terms of tissue distribution, expressed by the venom gland.

The protein localises to the secreted. Functionally, binds irreversibly and specifically to M1 (CHRM1) muscarinic acetylcholine receptors, blocking further binding of antagonists and preventing the action of agonists. The sequence is that of Muscarinic m1-toxin2 from Dendroaspis angusticeps (Eastern green mamba).